The primary structure comprises 420 residues: Dynein axonemal assembly factor 4 (420 aa).

The 85-residue stretch at 3–87 (LQVSDYSWQQ…KEAAMWETLS (85 aa)) folds into the CS domain. The segment at 7 to 103 (DYSWQQTKTA…EMMQRIREKS (97 aa)) is mediates interaction with ESR1 and STUB1. TPR repeat units follow at residues 290–323 (PEWLKDKGNKLFATENYLAAINAYNLAIRLNNKM), 324–357 (PLLYLNRAACHLKLKNLHKAIEDSSKALELLMPP), and 366–399 (MKAHVRRGTAFCQLELYVEGLQDYEAALKIDPSN).

In terms of assembly, interacts with ZMYND10. Interacts with STUB1. Interacts with ESR1 and ESR2. Interacts with DNAAF2. Interacts with CCT3, CCT4, CCT5 and CCT8. Interacts with DNAAF6/PIH1D3.

It is found in the nucleus. It localises to the cytoplasm. The protein localises to the cell projection. Its subcellular location is the neuron projection. The protein resides in the dynein axonemal particle. Its function is as follows. Involved in neuronal migration during development of the cerebral neocortex. May regulate the stability and proteasomal degradation of the estrogen receptors that play an important role in neuronal differentiation, survival and plasticity. Axonemal dynein assembly factor required for ciliary motility. This is Dynein axonemal assembly factor 4 from Pan paniscus (Pygmy chimpanzee).